The primary structure comprises 207 residues: MAEYTLPDLDWDYGALEPHISGQINELHHSKHHATYVKGANDAVAKLEEARAKEDHSAILLNEKNLAFNLAGHVNHTIWWKNLSPNGGDKPTGELAAAIADAFGSFDKFRAQFHAAATTVQGSGWAALGWDTLGNKLLIFQVYDHQTNFPLGIVPLLLLDMWEHAFYLQYKNVKVDFAKAFWNVVNWADVQSRYAAATSQTKGLIFG.

4 residues coordinate Fe cation: His-28, His-76, Asp-160, and His-164.

It belongs to the iron/manganese superoxide dismutase family. As to quaternary structure, homotetramer. Fe cation serves as cofactor.

It localises to the secreted. The enzyme catalyses 2 superoxide + 2 H(+) = H2O2 + O2. Destroys superoxide anion radicals which are normally produced within the cells and which are toxic to biological systems. The polypeptide is Superoxide dismutase [Fe] (sodB) (Mycobacterium tuberculosis (strain CDC 1551 / Oshkosh)).